A 151-amino-acid polypeptide reads, in one-letter code: Regulatory protein RecX (151 aa).

This sequence belongs to the RecX family.

Its subcellular location is the cytoplasm. In terms of biological role, modulates RecA activity. The sequence is that of Regulatory protein RecX from Herminiimonas arsenicoxydans.